The chain runs to 392 residues: MYALRHLRLQSARHFRSSYAAAATTKHMLPRQPARVLIGDWSTWDKSRLQDVCSRSSSTATEPVKQQTPLQELVSAAKPYAQLMRIDRPIGTYLLFWPCAWSIALSADAGCWPDLTMLGLFGTGALIMRGAGCTINDLWDKDIDAKVERTRLRPLASGQISQFDAIVFLSAQLSLGLLVLVQLNWQSILLGASSLGLVITYPLMKRVTYWPQLVLGMAFNWGALLGWCATQGSVNLAACLPLYLSGVCWTIVYDTIYAHQDKLDDLQIGVKSTALRFGENTKVWLSGFTAAMLTGLSAAGWACDQTVPYYAAVGVVGAHLVQQIYSLNIDNPSDCAKKFISNHQVGLILFLGIVLGTLLKSDESKKQRQSSLTTSTASSYVPALPQKPEVLS.

Residues 1–22 constitute a mitochondrion transit peptide; it reads MYALRHLRLQSARHFRSSYAAA. 9 helical membrane passes run 90–110, 115–135, 163–183, 184–204, 207–227, 236–256, 283–303, 307–327, and 339–359; these read IGTYLLFWPCAWSIALSADAG, LTMLGLFGTGALIMRGAGCTI, FDAIVFLSAQLSLGLLVLVQL, NWQSILLGASSLGLVITYPLM, VTYWPQLVLGMAFNWGALLGW, LAACLPLYLSGVCWTIVYDTI, VWLSGFTAAMLTGLSAAGWAC, VPYYAAVGVVGAHLVQQIYSL, and FISNHQVGLILFLGIVLGTLL. The interval 365 to 392 is disordered; the sequence is KKQRQSSLTTSTASSYVPALPQKPEVLS. A compositionally biased stretch (polar residues) spans 369-379; that stretch reads QSSLTTSTASS.

Belongs to the UbiA prenyltransferase family. It depends on Mg(2+) as a cofactor.

It is found in the mitochondrion inner membrane. It carries out the reaction an all-trans-polyprenyl diphosphate + 4-hydroxybenzoate = a 4-hydroxy-3-(all-trans-polyprenyl)benzoate + diphosphate. The protein operates within cofactor biosynthesis; ubiquinone biosynthesis. Functionally, catalyzes the prenylation of para-hydroxybenzoate (PHB) with an all-trans polyprenyl group. Mediates the second step in the final reaction sequence of coenzyme Q (CoQ) biosynthesis, which is the condensation of the polyisoprenoid side chain with PHB, generating the first membrane-bound Q intermediate. This Drosophila melanogaster (Fruit fly) protein is 4-hydroxybenzoate polyprenyltransferase, mitochondrial.